The primary structure comprises 427 residues: Peptidase B (427 aa).

The Mn(2+) site is built by Lys195 and Asp200. Lys207 is a catalytic residue. Asp218, Asp277, and Glu279 together coordinate Mn(2+). The active site involves Arg281.

Belongs to the peptidase M17 family. In terms of assembly, homohexamer. Mn(2+) serves as cofactor.

It localises to the cytoplasm. The enzyme catalyses Release of an N-terminal amino acid, Xaa, from a peptide or arylamide. Xaa is preferably Glu or Asp but may be other amino acids, including Leu, Met, His, Cys and Gln.. Functionally, probably plays an important role in intracellular peptide degradation. The protein is Peptidase B of Escherichia coli (strain UTI89 / UPEC).